The chain runs to 105 residues: Small ribosomal subunit protein uS10 (105 aa).

It belongs to the universal ribosomal protein uS10 family. Part of the 30S ribosomal subunit.

Involved in the binding of tRNA to the ribosomes. The polypeptide is Small ribosomal subunit protein uS10 (Trichodesmium erythraeum (strain IMS101)).